Here is a 129-residue protein sequence, read N- to C-terminus: Small ribosomal subunit protein uS11 (129 aa).

This sequence belongs to the universal ribosomal protein uS11 family. As to quaternary structure, part of the 30S ribosomal subunit. Interacts with proteins S7 and S18. Binds to IF-3.

In terms of biological role, located on the platform of the 30S subunit, it bridges several disparate RNA helices of the 16S rRNA. Forms part of the Shine-Dalgarno cleft in the 70S ribosome. The chain is Small ribosomal subunit protein uS11 from Methylobacillus flagellatus (strain ATCC 51484 / DSM 6875 / VKM B-1610 / KT).